The following is a 613-amino-acid chain: Pentatricopeptide repeat-containing protein At2g45350, chloroplastic (613 aa).

PPR repeat units lie at residues 85 to 119 (DPFLWNAVIKSHSHGKDPRQALLLLCLMLENGVSV), 120 to 154 (DKFSLSLVLKACSRLGFVKGGMQIHGFLKKTGLWS), 155 to 185 (DLFLQNCLIGLYLKCGCLGLSRQMFDRMPKR), 186 to 216 (DSVSYNSMIDGYVKCGLIVSARELFDLMPME), 219 to 250 (NLISWNSMISGYAQTSDGVDIASKLFADMPEK), 251 to 285 (DLISWNSMIDGYVKHGRIEDAKGLFDVMPRRDVVT), 286 to 312 (WATMIDGYAKLGFVHHAKTLFDQMPHR), 313 to 347 (DVVAYNSMMAGYVQNKYHMEALEIFSDMEKESHLL), 349 to 383 (DDTTLVIVLPAIAQLGRLSKAIDMHLYIVEKQFYL), 384 to 414 (GGKLGVALIDMYSKCGSIQHAMLVFEGIENK), 415 to 449 (SIDHWNAMIGGLAIHGLGESAFDMLLQIERLSLKP), 450 to 480 (DDITFVGVLNACSHSGLVKEGLLCFELMRRK), and 486 to 516 (RLQHYGCMVDILSRSGSIELAKNLIEEMPVE). Positions 521 to 596 (IWRTFLTACS…IPGCSWIELD (76 aa)) are type E motif.

The protein belongs to the PPR family. PCMP-E subfamily. As to quaternary structure, interacts with DYW1.

The protein localises to the plastid. The protein resides in the chloroplast. Functionally, plays a major role in chloroplast RNA editing. Acts as a site-recognition transacting factor to recruit C-deaminase. Involved in single RNA editing events. Required for the edition of the site 1 of ndhD (ndhD-1 site corresponding to cytidine-2), which is a plastid-encoded subunit of the NADH-plastoquinone oxidoreductase. The interaction with DYW1 is required for its function in editing the ndhD-1 site. This chain is Pentatricopeptide repeat-containing protein At2g45350, chloroplastic (CRR4), found in Arabidopsis thaliana (Mouse-ear cress).